Consider the following 457-residue polypeptide: C4-dicarboxylate transport protein (457 aa).

A run of 9 helical transmembrane segments spans residues 22–42 (FQVVVAIILGALLGRFEPAFA), 55–75 (LVKMIIAPVIFLTIVTGIAGM), 90–110 (VYFLFFSTLALVVGLVVAHVV), 138–158 (LTLVGFLMDIIPNSLIGAFTG), 168–188 (GPNILQVLFVAVLFGVSLALV), 209–229 (LVHILMRAAPIGAFGAIAFTI), 242–262 (WLVGSFYLTSLLFVLVILGVV), 335–357 (LFIAQATNTELTLGHQIALLAVA), and 376–396 (AATLAVVPEVPVAGMALILGV).

It belongs to the dicarboxylate/amino acid:cation symporter (DAACS) (TC 2.A.23) family.

The protein localises to the cell inner membrane. Functionally, responsible for the transport of dicarboxylates such as succinate, fumarate, and malate from the periplasm across the membrane. The polypeptide is C4-dicarboxylate transport protein (Xanthomonas oryzae pv. oryzae (strain MAFF 311018)).